The primary structure comprises 251 residues: Ubiquinone/menaquinone biosynthesis C-methyltransferase UbiE (251 aa).

S-adenosyl-L-methionine-binding positions include Thr74, Asp95, and 123 to 124 (NA).

It belongs to the class I-like SAM-binding methyltransferase superfamily. MenG/UbiE family.

The catalysed reaction is a 2-demethylmenaquinol + S-adenosyl-L-methionine = a menaquinol + S-adenosyl-L-homocysteine + H(+). It carries out the reaction a 2-methoxy-6-(all-trans-polyprenyl)benzene-1,4-diol + S-adenosyl-L-methionine = a 5-methoxy-2-methyl-3-(all-trans-polyprenyl)benzene-1,4-diol + S-adenosyl-L-homocysteine + H(+). Its pathway is quinol/quinone metabolism; menaquinone biosynthesis; menaquinol from 1,4-dihydroxy-2-naphthoate: step 2/2. It functions in the pathway cofactor biosynthesis; ubiquinone biosynthesis. Functionally, methyltransferase required for the conversion of demethylmenaquinol (DMKH2) to menaquinol (MKH2) and the conversion of 2-polyprenyl-6-methoxy-1,4-benzoquinol (DDMQH2) to 2-polyprenyl-3-methyl-6-methoxy-1,4-benzoquinol (DMQH2). In Psychromonas ingrahamii (strain DSM 17664 / CCUG 51855 / 37), this protein is Ubiquinone/menaquinone biosynthesis C-methyltransferase UbiE.